The chain runs to 503 residues: Endoglycoceramidase (503 aa).

An N-terminal signal peptide occupies residues 1–21; it reads MAETQPLVFVLMSISAILTAG. Residues N72, N108, and N205 are each glycosylated (N-linked (GlcNAc...) asparagine). The active-site Proton donor is E239. 3 N-linked (GlcNAc...) asparagine glycosylation sites follow: N307, N409, and N485.

This sequence belongs to the glycosyl hydrolase 5 (cellulase A) family.

The protein localises to the secreted. The protein resides in the nematocyst. The enzyme catalyses an oligoglycosyl-(1-&gt;4)-beta-D-glucosyl-(1&lt;-&gt;1)-ceramide + H2O = an oligoglycosyl-(1-&gt;4)-D-glucose + an N-acyl-sphingoid base. Completely inhibited by Hg(2+). Cu(2+) and zinc have no effect on enzyme activity. Lithium, potassium, manganese, Ni(2+), calcium, magnesium and EDTA have no significant effect on enzyme activity. Enzyme requires presence of detergents such as Triton X-100 and Lubrol PX for the hydrolysis of glycosphingolipids. Taurodeoxycholate strongly inhibits the enzyme activity and SDS completely inhibits the enzyme activity. In terms of biological role, hydrolysis of the glycosidic linkage between oligosaccharides and ceramides of glycosphingolipids, especially b-series polysialogangliosides. This Cyanea nozakii (Jellyfish) protein is Endoglycoceramidase.